Reading from the N-terminus, the 497-residue chain is Meiosis-specific serine/threonine-protein kinase MEK1 (497 aa).

Residues V47–L102 form the FHA domain. The 283-residue stretch at E162 to I444 folds into the Protein kinase domain. ATP-binding positions include V168 to V176 and K199. D290 functions as the Proton acceptor in the catalytic mechanism.

It belongs to the protein kinase superfamily. CAMK Ser/Thr protein kinase family. CHEK2 subfamily.

The catalysed reaction is L-seryl-[protein] + ATP = O-phospho-L-seryl-[protein] + ADP + H(+). It catalyses the reaction L-threonyl-[protein] + ATP = O-phospho-L-threonyl-[protein] + ADP + H(+). In terms of biological role, probable protein kinase required for meiotic recombination. This is Meiosis-specific serine/threonine-protein kinase MEK1 (MEK1) from Saccharomyces cerevisiae (strain ATCC 204508 / S288c) (Baker's yeast).